The chain runs to 417 residues: uncharacterized protein (417 aa).

2 disordered regions span residues 1–41 (MDSE…EDQA) and 233–262 (QDSA…STRS). A compositionally biased stretch (basic and acidic residues) spans 31–41 (DEDHIFHEDQA). The span at 235–245 (SAYNDQAPSTS) shows a compositional bias: polar residues.

This is an uncharacterized protein from Caenorhabditis elegans.